We begin with the raw amino-acid sequence, 177 residues long: Protein VERNALIZATION 3 (177 aa).

Belongs to the phosphatidylethanolamine-binding protein family. Expressed in leaves but not in shoot apex.

Its function is as follows. Involved in the regulation of vernalization and of flowering time; this process in essential for flowering in cv. Bd29-1 but seems do not occur in cv. Bd21. This is Protein VERNALIZATION 3 from Brachypodium distachyon (Purple false brome).